A 99-amino-acid polypeptide reads, in one-letter code: UPF0125 protein BU253 (99 aa).

Belongs to the UPF0125 (RnfH) family.

The sequence is that of UPF0125 protein BU253 from Buchnera aphidicola subsp. Acyrthosiphon pisum (strain APS) (Acyrthosiphon pisum symbiotic bacterium).